The chain runs to 523 residues: Cytochrome P450 52A3-B (523 aa).

The chain crosses the membrane as a helical span at residues W17–L34. C471 provides a ligand contact to heme.

It belongs to the cytochrome P450 family. It depends on heme as a cofactor.

The protein localises to the membrane. Together with an NADPH cytochrome P450 the enzyme system catalyzes the terminal hydroxylation as the first step in the assimilation of alkanes and fatty acids. This chain is Cytochrome P450 52A3-B (CYP52A3-B), found in Candida maltosa (Yeast).